The following is a 1012-amino-acid chain: Centriole and centriolar satellite protein OFD1 (1012 aa).

The region spanning 70-102 is the LisH domain; that stretch reads LIGASNSLVADHLQRCGYEYSLSVFFPESGLAK. 2 coiled-coil regions span residues 189–557 and 622–662; these read QRIK…ENEV and DSDL…NSAK. A mediates homooligomerization region spans residues 609-665; the sequence is TNYPTAWVEGSSPDSDLEFVANTKARVKELQQEAERLEKAFRSYHRRVIKNSAKSPL. Residues 615–1012 form a mediates the interaction with SDCCAG8 region; sequence WVEGSSPDSD…FSHEELDDSW (398 aa). 4 positions are modified to phosphoserine: Ser663, Ser669, Ser686, and Ser720. Residues 719–744 are disordered; sequence GSAASRLRGGTSSRRLSSTPLPKAKR. Low complexity predominate over residues 720 to 737; that stretch reads SAASRLRGGTSSRRLSST. A Phosphoserine; by PKA modification is found at Ser735. Phosphoserine is present on residues Ser745, Ser774, Ser789, and Ser811. A disordered region spans residues 757–794; that stretch reads RSHIASPSPCPDRMPLPSPTESRHSLSIPPVSSPPEQK. A compositionally biased stretch (pro residues) spans 764-774; it reads SPCPDRMPLPS. 2 disordered regions span residues 824-904 and 963-1012; these read FESS…LQEV and KIIQ…DDSW. The stretch at 867 to 956 forms a coiled coil; it reads SVDQKQIEEQ…IKDKSAHSEN (90 aa). Composition is skewed to basic and acidic residues over residues 871–904 and 973–982; these read KQIE…LQEV and SADKSSKKMV.

The protein belongs to the OFD1 family. In terms of assembly, homooligomer. Interacts with LCA5. Interacts with RUVBL1; the interaction is direct and may mediate interaction with the NuA4 histone acetyltransferase complex. Interacts with SDCCAG8; the interaction is direct. Interacts with MAP1LC3B. Interacts with C2CD3; OFD1 may act as a negative regulator of C2CD3. Forms a complex with KIAA0753/OFIP and CEP20/FOR20; the interaction with CEP20 is detected only in the presence of KIAA0753. Interacts with PCM1; this interaction may be mediated by KIAA0753/OFIP. Interacts with TBC1D31; regulates OFD1 activity in cilium assembly. In terms of processing, phosphorylated. Phosphorylation at Ser-735, by the cAMP-dependent protein kinase PKA, triggers ubiquitination and proteasomal degradation of OFD1. Also increases its interaction with TBC1D31 and regulates its function in ciliogenesis. Post-translationally, ubiquitinated by PJA2, upon phosphorylation at Ser-735 by PKA, leads to the proteasomal degradation of OFD1. As to expression, widely expressed. Expressed in 9 and 14 weeks old embryos in metanephric mesenchyme, oral mucosa, lung, heart, nasal and cranial cartilage, and brain. Expressed in metanephros, brain, tongue, and limb.

The protein resides in the cytoplasm. It localises to the cytoskeleton. It is found in the microtubule organizing center. Its subcellular location is the centrosome. The protein localises to the centriole. The protein resides in the cilium basal body. It localises to the nucleus. It is found in the centriolar satellite. In terms of biological role, component of the centrioles controlling mother and daughter centrioles length. Recruits to the centriole IFT88 and centriole distal appendage-specific proteins including CEP164. Involved in the biogenesis of the cilium, a centriole-associated function. The cilium is a cell surface projection found in many vertebrate cells required to transduce signals important for development and tissue homeostasis. Plays an important role in development by regulating Wnt signaling and the specification of the left-right axis. Only OFD1 localized at the centriolar satellites is removed by autophagy, which is an important step in the ciliogenesis regulation. In Homo sapiens (Human), this protein is Centriole and centriolar satellite protein OFD1 (OFD1).